A 447-amino-acid chain; its full sequence is tRNA-2-methylthio-N(6)-dimethylallyladenosine synthase (447 aa).

Residues 10–128 (KLFCISTYGC…FPEYLHRVLQ (119 aa)) form the MTTase N-terminal domain. [4Fe-4S] cluster contacts are provided by cysteine 19, cysteine 55, cysteine 89, cysteine 165, cysteine 169, and cysteine 172. In terms of domain architecture, Radical SAM core spans 151–382 (RKSDVKAFVT…EAINKKVVIK (232 aa)). Residues 384-447 (KEYEGKVVEV…PFSLIGEIVE (64 aa)) form the TRAM domain.

The protein belongs to the methylthiotransferase family. MiaB subfamily. In terms of assembly, monomer. It depends on [4Fe-4S] cluster as a cofactor.

The protein localises to the cytoplasm. It carries out the reaction N(6)-dimethylallyladenosine(37) in tRNA + (sulfur carrier)-SH + AH2 + 2 S-adenosyl-L-methionine = 2-methylsulfanyl-N(6)-dimethylallyladenosine(37) in tRNA + (sulfur carrier)-H + 5'-deoxyadenosine + L-methionine + A + S-adenosyl-L-homocysteine + 2 H(+). Functionally, catalyzes the methylthiolation of N6-(dimethylallyl)adenosine (i(6)A), leading to the formation of 2-methylthio-N6-(dimethylallyl)adenosine (ms(2)i(6)A) at position 37 in tRNAs that read codons beginning with uridine. In Clostridium perfringens (strain SM101 / Type A), this protein is tRNA-2-methylthio-N(6)-dimethylallyladenosine synthase.